A 250-amino-acid polypeptide reads, in one-letter code: Membrane-spanning 4-domains subfamily A member 8 (250 aa).

At M1–A74 the chain is on the cytoplasmic side. Residues I75 to V95 form a helical membrane-spanning segment. Over G96 to Y98 the chain is Extracellular. Residues L99–G119 traverse the membrane as a helical segment. Topologically, residues S120–S136 are cytoplasmic. The chain crosses the membrane as a helical span at residues G137–I157. The Extracellular portion of the chain corresponds to T158 to P180. The chain crosses the membrane as a helical span at residues G181 to A201. The Cytoplasmic portion of the chain corresponds to S202 to K250.

It belongs to the MS4A family. In terms of tissue distribution, expressed by hematopoietic tissues and cells lines.

It localises to the membrane. In terms of biological role, may be involved in signal transduction as a component of a multimeric receptor complex. This chain is Membrane-spanning 4-domains subfamily A member 8 (MS4A8), found in Homo sapiens (Human).